Here is a 267-residue protein sequence, read N- to C-terminus: Undecaprenyl-diphosphatase (267 aa).

7 consecutive transmembrane segments (helical) span residues 39–59 (PGLAFDVALHFGTLLALIWYF), 87–107 (VLYLIAATIPGGIGGLLLNDL), 112–132 (FRSPVVIATSLIVMGILLWAV), 145–165 (VTLRDAIIVGCAQVLALVPGV), 183–203 (PSVARFSFLMSMPITLAAVIV), 216–236 (LPLLAGVAAAAVSSWFAISVL), and 244–264 (SFGVFAVYRVLLGIVVFATLA).

The protein belongs to the UppP family.

The protein localises to the cell inner membrane. It catalyses the reaction di-trans,octa-cis-undecaprenyl diphosphate + H2O = di-trans,octa-cis-undecaprenyl phosphate + phosphate + H(+). In terms of biological role, catalyzes the dephosphorylation of undecaprenyl diphosphate (UPP). Confers resistance to bacitracin. This Gemmatimonas aurantiaca (strain DSM 14586 / JCM 11422 / NBRC 100505 / T-27) protein is Undecaprenyl-diphosphatase.